We begin with the raw amino-acid sequence, 251 residues long: 3-deoxy-manno-octulosonate cytidylyltransferase (251 aa).

It belongs to the KdsB family.

It is found in the cytoplasm. It carries out the reaction 3-deoxy-alpha-D-manno-oct-2-ulosonate + CTP = CMP-3-deoxy-beta-D-manno-octulosonate + diphosphate. The protein operates within nucleotide-sugar biosynthesis; CMP-3-deoxy-D-manno-octulosonate biosynthesis; CMP-3-deoxy-D-manno-octulosonate from 3-deoxy-D-manno-octulosonate and CTP: step 1/1. It functions in the pathway bacterial outer membrane biogenesis; lipopolysaccharide biosynthesis. Its function is as follows. Activates KDO (a required 8-carbon sugar) for incorporation into bacterial lipopolysaccharide in Gram-negative bacteria. The polypeptide is 3-deoxy-manno-octulosonate cytidylyltransferase (Rhizobium etli (strain ATCC 51251 / DSM 11541 / JCM 21823 / NBRC 15573 / CFN 42)).